A 332-amino-acid polypeptide reads, in one-letter code: Biotin synthase (332 aa).

The Radical SAM core domain maps to 52–282; the sequence is FPENEVEFCS…KAELRLCGGR (231 aa). 3 residues coordinate [4Fe-4S] cluster: Cys70, Cys74, and Cys77. 4 residues coordinate [2Fe-2S] cluster: Cys114, Cys147, Cys207, and Arg277.

It belongs to the radical SAM superfamily. Biotin synthase family. In terms of assembly, homodimer. The cofactor is [4Fe-4S] cluster. [2Fe-2S] cluster serves as cofactor.

It catalyses the reaction (4R,5S)-dethiobiotin + (sulfur carrier)-SH + 2 reduced [2Fe-2S]-[ferredoxin] + 2 S-adenosyl-L-methionine = (sulfur carrier)-H + biotin + 2 5'-deoxyadenosine + 2 L-methionine + 2 oxidized [2Fe-2S]-[ferredoxin]. The protein operates within cofactor biosynthesis; biotin biosynthesis; biotin from 7,8-diaminononanoate: step 2/2. Catalyzes the conversion of dethiobiotin (DTB) to biotin by the insertion of a sulfur atom into dethiobiotin via a radical-based mechanism. This is Biotin synthase from Aquifex aeolicus (strain VF5).